A 320-amino-acid chain; its full sequence is o-succinylbenzoate synthase (320 aa).

The active-site Proton donor is the Lys133. Asp161, Glu190, and Asp213 together coordinate Mg(2+). The Proton acceptor role is filled by Lys235.

Belongs to the mandelate racemase/muconate lactonizing enzyme family. MenC type 1 subfamily. A divalent metal cation is required as a cofactor.

The catalysed reaction is (1R,6R)-6-hydroxy-2-succinyl-cyclohexa-2,4-diene-1-carboxylate = 2-succinylbenzoate + H2O. Its pathway is quinol/quinone metabolism; 1,4-dihydroxy-2-naphthoate biosynthesis; 1,4-dihydroxy-2-naphthoate from chorismate: step 4/7. It functions in the pathway quinol/quinone metabolism; menaquinone biosynthesis. Functionally, converts 2-succinyl-6-hydroxy-2,4-cyclohexadiene-1-carboxylate (SHCHC) to 2-succinylbenzoate (OSB). The polypeptide is o-succinylbenzoate synthase (Escherichia coli O139:H28 (strain E24377A / ETEC)).